The chain runs to 138 residues: Basic phospholipase A2 homolog Tbo-K49 (138 aa).

The N-terminal stretch at 1–16 (MRTLWIMAVLLVGVEG) is a signal peptide. Cystine bridges form between C42–C131, C44–C60, C59–C111, C65–C138, C66–C104, and C91–C102. The interval 121-133 (KKERINTKIFCKK) is important for membrane-damaging activities in eukaryotes and bacteria; heparin-binding.

As to quaternary structure, monomer. Expressed by the venom gland.

Its subcellular location is the secreted. In terms of biological role, snake venom phospholipase A2 homolog that lacks catalytic activity. It induces local edema. Is myotoxic. A model of myotoxic mechanism has been proposed: an apo Lys49-PLA2 is activated by the entrance of a hydrophobic molecule (e.g. fatty acid) at the hydrophobic channel of the protein leading to a reorientation of a monomer. This reorientation causes a transition between 'inactive' to 'active' states, causing alignment of C-terminal and membrane-docking sites (MDoS) side-by-side and putting the membrane-disruption sites (MDiS) in the same plane, exposed to solvent and in a symmetric position for both monomers. The MDoS region stabilizes the toxin on membrane by the interaction of charged residues with phospholipid head groups. Subsequently, the MDiS region destabilizes the membrane with penetration of hydrophobic residues. This insertion causes a disorganization of the membrane, allowing an uncontrolled influx of ions (i.e. calcium and sodium), and eventually triggering irreversible intracellular alterations and cell death. The protein is Basic phospholipase A2 homolog Tbo-K49 of Craspedocephalus borneensis (Borneo pit viper).